Here is a 246-residue protein sequence, read N- to C-terminus: MKLFLYHTPELTPTDKAPECAIAVDVLRATSTIATVLASGGEAVQVFSDLDRLIEVSEKWPHEKRLRAGERGGAKVAGFELGNSPLDCTPELVQGRRLFISTTNGTRALQRVQDSPNVLAAALINRAAVVQFLLDKQPETVWIVGSGWEGSFSLEDTVCAGAIAHSIWQQTQLSPEEIAGNDEVISAIALYSQWQDNLLGLLHQASHGQRLLRLDCHEDLKYCSQTDILDVLPIQHETGVLKSQKK.

This sequence belongs to the ComB family. Mg(2+) serves as cofactor.

It catalyses the reaction (2R)-O-phospho-3-sulfolactate + H2O = (2R)-3-sulfolactate + phosphate. The protein is Probable 2-phosphosulfolactate phosphatase of Nostoc punctiforme (strain ATCC 29133 / PCC 73102).